The sequence spans 704 residues: PHD finger protein MALE MEIOCYTE DEATH 1 (704 aa).

The PHD-type zinc finger occupies 606–656 (MVKCICRARDDDGERMISCDVCEVWQHTRCCGIDDSDTLPPLFVCSNCCEE). Zn(2+) contacts are provided by C609, C611, C624, C627, H632, C635, C650, and C653.

In terms of assembly, interacts with JMJ16 in the nucleus of male meiocytes, especially on pachytene chromosomes. Expressed in inflorescence, specifically in male meiocytes.

Its subcellular location is the nucleus. In terms of biological role, probable transcription factor required for chromosome organization and progression during male meiosis (e.g. microsporogenesis). Necessary for fertility and meiotic progressive compaction of prophase I chromosomes to metaphase I bivalents. Together with JMJ16, promotes gene expression in male meiocytes in an H3K9me3-dependent manner, and contributes to meiotic chromosome condensation by triggering some condensin promoters (e.g. CAP-D3 and CAP-H). The chain is PHD finger protein MALE MEIOCYTE DEATH 1 from Arabidopsis thaliana (Mouse-ear cress).